We begin with the raw amino-acid sequence, 181 residues long: RNA-binding protein (181 aa).

The interval 106 to 181 is disordered; the sequence is FLTSVNPGES…DANTRKSKRK (76 aa). Over residues 141–157 the composition is skewed to basic residues; it reads RNSKKGAKKSSSARKKK. The segment covering 160 to 172 has biased composition (low complexity); the sequence is SSNSETDLSSDSD.

It belongs to the phytoreovirus RNA-binding protein family.

The protein resides in the host cytoplasm. In terms of biological role, constituent of viral factories. Binds to ssRNA and dsRNA. The sequence is that of RNA-binding protein from Rice dwarf virus (isolate Akita) (RDV).